A 296-amino-acid polypeptide reads, in one-letter code: Nucleotide-binding protein SGO_0954 (296 aa).

13–20 (GMSGAGKT) is a binding site for ATP. 63-66 (DMRS) contacts GTP.

This sequence belongs to the RapZ-like family.

Displays ATPase and GTPase activities. This is Nucleotide-binding protein SGO_0954 from Streptococcus gordonii (strain Challis / ATCC 35105 / BCRC 15272 / CH1 / DL1 / V288).